The sequence spans 129 residues: Small ribosomal subunit protein uS11 (129 aa).

This sequence belongs to the universal ribosomal protein uS11 family. In terms of assembly, part of the 30S ribosomal subunit. Interacts with proteins S7 and S18. Binds to IF-3.

Its function is as follows. Located on the platform of the 30S subunit, it bridges several disparate RNA helices of the 16S rRNA. Forms part of the Shine-Dalgarno cleft in the 70S ribosome. This is Small ribosomal subunit protein uS11 from Pseudomonas putida (strain GB-1).